The following is a 77-amino-acid chain: Acyl carrier protein (77 aa).

The Carrier domain maps to 2 to 77 (SSIDKRIKEI…DAIDYITDHT (76 aa)). Position 37 is an O-(pantetheine 4'-phosphoryl)serine (serine 37).

Belongs to the acyl carrier protein (ACP) family. 4'-phosphopantetheine is transferred from CoA to a specific serine of apo-ACP by AcpS. This modification is essential for activity because fatty acids are bound in thioester linkage to the sulfhydryl of the prosthetic group.

The protein resides in the cytoplasm. The protein operates within lipid metabolism; fatty acid biosynthesis. Functionally, carrier of the growing fatty acid chain in fatty acid biosynthesis. This is Acyl carrier protein from Geotalea daltonii (strain DSM 22248 / JCM 15807 / FRC-32) (Geobacter daltonii).